A 522-amino-acid polypeptide reads, in one-letter code: MAFLDNPTIILAHIRQSHVTSDDTGMCEMVLIDHDVDLEKFNPSSTYGDSASETQGSNGETQGYVYSQSVDITSSWDFGIRRRSNTAQRLERLRKERQNQIKCKNVQWKDRNTSYSAEELSSLFEKKNFRVRSPCSGKQSILSVRLEQCPLQLNNPFNEYSKFDGKGHVGTTATKKIDVYLPLHANQDKLQPMTVVTIANAKVHDLIGLICWQYTSEGREPKLNDNVSAYCLHIAEDDGEVDTDFPPLDSNEPIHKFGFSTLALVEKYSSPGLAAKQSLFVRINAAHGFSLIQVDSMKVTMKDILQKALKRRKGSQRGSGPQYRLEKQSEPNVPVDLDCTLESQSTLEFCLVRENSSRGEEISEEDPQIDIATVQDMLSSHHYKSFKVSMIHRLRFTTDVQLGISGDKVEIDPVTNQKASTKFWIKQKPISIDSELLCACDLVEEKSPSHAIFKLTYLSNHDYKHLYFESDAATVNEIVLKVNYILESRASTARAEYFAQKQRKLNRRTSFSFQKEKKSGQQ.

Residues 43-62 (PSSTYGDSASETQGSNGETQ) form a disordered region. In terms of domain architecture, CRIM spans 139 to 267 (QSILSVRLEQ…GFSTLALVEK (129 aa)). An SIN1-type RBD region spans residues 279–353 (LFVRINAAHG…QSTLEFCLVR (75 aa)). A disordered region spans residues 310-330 (KRRKGSQRGSGPQYRLEKQSE). Residues 382 to 487 (HYKSFKVSMI…IVLKVNYILE (106 aa)) form the SIN1-type PH domain. A 1,2-diacyl-sn-glycero-3-phospho-(1D-myo-inositol-3,4,5-trisphosphate)-binding residues include Arg-393, Lys-428, and Lys-464.

The protein belongs to the SIN1 family. As to quaternary structure, component of the mechanistic target of rapamycin complex 2 (mTORC2), consisting in two heterotretramers composed of MTOR, MLST8, RICTOR and MAPKAP1/SIN1. Contrary to mTORC1, mTORC2 does not bind to and is not sensitive to FKBP12-rapamycin.

The protein localises to the cell membrane. The protein resides in the endoplasmic reticulum membrane. Its subcellular location is the early endosome membrane. It is found in the late endosome membrane. It localises to the lysosome membrane. The protein localises to the golgi apparatus membrane. The protein resides in the mitochondrion outer membrane. Its subcellular location is the cytoplasm. It is found in the perinuclear region. It localises to the nucleus. Its activity is regulated as follows. Phosphatidylinositol 3,4,5-trisphosphate (PI(3,4,5)P3) promotes MTOR activation by relieving MAPKAP1/SIN1-mediated inhibition of MTOR that takes place in absence of PI(3,4,5)P3. In terms of biological role, component of the mechanistic target of rapamycin complex 2 (mTORC2), which transduces signals from growth factors to pathways involved in proliferation, cytoskeletal organization, lipogenesis and anabolic output. In response to growth factors, mTORC2 phosphorylates and activates AGC protein kinase family members, including AKT (AKT1, AKT2 and AKT3), PKC (PRKCA, PRKCB and PRKCE) and SGK1. In contrast to mTORC1, mTORC2 is nutrient-insensitive. Within the mTORC2 complex, MAPKAP1/SIN1 acts as a substrate adapter which recognizes and binds AGC protein kinase family members for phosphorylation by MTOR. The protein is Target of rapamycin complex 2 subunit MAPKAP1 (MAPKAP1) of Gallus gallus (Chicken).